The following is a 188-amino-acid chain: Acireductone dioxygenase 1 (188 aa).

Residues histidine 90, histidine 92, glutamate 96, and histidine 135 each contribute to the Fe(2+) site. Positions 90, 92, 96, and 135 each coordinate Ni(2+).

Belongs to the acireductone dioxygenase (ARD) family. Requires Fe(2+) as cofactor. The cofactor is Ni(2+).

The protein localises to the cytoplasm. Its subcellular location is the nucleus. It carries out the reaction 1,2-dihydroxy-5-(methylsulfanyl)pent-1-en-3-one + O2 = 4-methylsulfanyl-2-oxobutanoate + formate + 2 H(+). The enzyme catalyses 1,2-dihydroxy-5-(methylsulfanyl)pent-1-en-3-one + O2 = 3-(methylsulfanyl)propanoate + CO + formate + 2 H(+). It functions in the pathway amino-acid biosynthesis; L-methionine biosynthesis via salvage pathway; L-methionine from S-methyl-5-thio-alpha-D-ribose 1-phosphate: step 5/6. Functionally, catalyzes 2 different reactions between oxygen and the acireductone 1,2-dihydroxy-3-keto-5-methylthiopentene (DHK-MTPene) depending upon the metal bound in the active site. Fe-containing acireductone dioxygenase (Fe-ARD) produces formate and 2-keto-4-methylthiobutyrate (KMTB), the alpha-ketoacid precursor of methionine in the methionine recycle pathway. Ni-containing acireductone dioxygenase (Ni-ARD) produces methylthiopropionate, carbon monoxide and formate, and does not lie on the methionine recycle pathway. The protein is Acireductone dioxygenase 1 of Vitis vinifera (Grape).